A 387-amino-acid chain; its full sequence is ATP phosphoribosyltransferase regulatory subunit (387 aa).

It belongs to the class-II aminoacyl-tRNA synthetase family. HisZ subfamily. Heteromultimer composed of HisG and HisZ subunits.

The protein resides in the cytoplasm. The protein operates within amino-acid biosynthesis; L-histidine biosynthesis; L-histidine from 5-phospho-alpha-D-ribose 1-diphosphate: step 1/9. Functionally, required for the first step of histidine biosynthesis. May allow the feedback regulation of ATP phosphoribosyltransferase activity by histidine. The protein is ATP phosphoribosyltransferase regulatory subunit of Methylobacillus flagellatus (strain ATCC 51484 / DSM 6875 / VKM B-1610 / KT).